A 235-amino-acid chain; its full sequence is Protein FEV (235 aa).

The segment at residues 58–138 (IQLWQFLLEL…HGKRYAYKFD (81 aa)) is a DNA-binding region (ETS).

The protein belongs to the ETS family. Expressed by serotonergic neurons in anterior and posterior raphe.

It localises to the nucleus. Functionally, functions as a transcriptional regulator. Functions in the differentiation and the maintenance of the central serotonergic neurons. May play a role in cell growth. The chain is Protein FEV (fev) from Danio rerio (Zebrafish).